The primary structure comprises 478 residues: D-ribulose kinase (478 aa).

Residues 1–38 (MLILRQFQISSFELFQSPKQTGFYSSSRSVPLPRTRFY) constitute a chloroplast transit peptide. Residues Asp60, 64 to 67 (SGGR), and Asp278 contribute to the substrate site. ATP is bound by residues Ser300, Gly338, and 433–437 (GGAKN).

This sequence belongs to the FGGY kinase family. Requires a divalent metal cation as cofactor.

It localises to the plastid. It is found in the chloroplast. The catalysed reaction is D-ribulose + ATP = D-ribulose 5-phosphate + ADP + H(+). Its function is as follows. Exhibits ATP hydrolysis without substrate. Can phosphorylate D-ribulose with low efficiency. The protein is D-ribulose kinase of Arabidopsis thaliana (Mouse-ear cress).